We begin with the raw amino-acid sequence, 137 residues long: Ribonuclease kappa (137 aa).

Helical transmembrane passes span 52 to 72 (ACGI…GIFF) and 104 to 124 (VSYN…FSFC).

This sequence belongs to the RNase K family. Interacts with the proton translocation complex V0 of the V-ATPase. Interacts with ATP6AP1. In terms of tissue distribution, widely expressed.

Its subcellular location is the endomembrane system. It is found in the cytoplasmic vesicle. The protein resides in the clathrin-coated vesicle membrane. Functionally, endoribonuclease which preferentially cleaves ApU and ApG phosphodiester bonds. Hydrolyzes UpU bonds at a lower rate. Regulates the activity of vacuolar (H+)-ATPase (V-ATPase) which is responsible for acidifying and maintaining the pH of intracellular compartments. Required at an early stage of receptor-mediated endocytosis. Its function is as follows. (Microbial infection) Required at an early stage of both clathrin-mediated and clathrin-independent endocytic uptake of a diverse set of viruses, including dengue, West Nile, Sindbis, Rift Valley Fever, influenza, and human rhinoviruses. In Homo sapiens (Human), this protein is Ribonuclease kappa (RNASEK).